Reading from the N-terminus, the 1110-residue chain is cGMP-specific 3',5'-cyclic phosphodiesterase (1110 aa).

Low complexity-rich tracts occupy residues 1–25 (MTDV…SSAS) and 35–55 (TSTA…ASGA). 3 disordered regions span residues 1-55 (MTDV…ASGA), 67-128 (ISNQ…QQDV), and 184-203 (ASPT…SASS). Over residues 88 to 103 (APYPPVPAAKPKPTPT) the composition is skewed to pro residues. Residues 192–203 (SPRSLSNSSASS) are compositionally biased toward low complexity. GAF domains are found at residues 233-385 (DIDV…GIGI) and 417-601 (NLEC…GLGI). The PDEase domain maps to 631-954 (SQDQTEKLTQ…RNWQDLAEKV (324 aa)). The active-site Proton donor is the His-707. A divalent metal cation contacts are provided by His-711, His-747, Asp-748, and Asp-858. Disordered stretches follow at residues 997-1028 (AQHG…TGAL) and 1040-1110 (LYNS…CSLL). Composition is skewed to basic and acidic residues over residues 1006 to 1015 (DDSHTPEHQR) and 1056 to 1068 (LESH…DDKS). A compositionally biased stretch (low complexity) spans 1082 to 1097 (GRMSASSSTSSAGTVV). Residues 1100 to 1110 (SKKRSKLCSLL) are compositionally biased toward basic residues. Residue Cys-1107 is modified to Cysteine methyl ester. Cys-1107 is lipidated: S-farnesyl cysteine. Positions 1108-1110 (SLL) are cleaved as a propeptide — removed in mature form.

It belongs to the cyclic nucleotide phosphodiesterase family. As to quaternary structure, interacts with PrBP. A divalent metal cation serves as cofactor.

It is found in the cell membrane. The catalysed reaction is 3',5'-cyclic GMP + H2O = GMP + H(+). Has a role regulating cGMP transport in Malpighian tubule principal cells. The protein is cGMP-specific 3',5'-cyclic phosphodiesterase of Drosophila pseudoobscura pseudoobscura (Fruit fly).